We begin with the raw amino-acid sequence, 1038 residues long: Probable ubiquitin conjugation factor E4 (1038 aa).

Disordered stretches follow at residues Ala-430–Gln-459 and Ser-1010–Asp-1038. Over residues Ser-446–Gln-459 the composition is skewed to low complexity. One can recognise a U-box domain in the interval Glu-940–Lys-1014. The span at Thr-1017–Ile-1028 shows a compositional bias: basic and acidic residues. Residues Gln-1029–Asp-1038 show a composition bias toward polar residues.

This sequence belongs to the ubiquitin conjugation factor E4 family.

It is found in the cytoplasm. It localises to the nucleus. It catalyses the reaction S-ubiquitinyl-[E2 ubiquitin-conjugating enzyme]-L-cysteine + [acceptor protein]-L-lysine = [E2 ubiquitin-conjugating enzyme]-L-cysteine + N(6)-ubiquitinyl-[acceptor protein]-L-lysine.. It functions in the pathway protein modification; protein ubiquitination. In terms of biological role, ubiquitin-protein ligase that may function as an E3 ligase in conjunction with specific E1 and E2 ligases. May also function as an E4 ligase mediating the assembly of polyubiquitin chain assembly on substrates monoubiquitinated by another E3 ubiquitin ligase. This chain is Probable ubiquitin conjugation factor E4 (PUB1), found in Arabidopsis thaliana (Mouse-ear cress).